Consider the following 303-residue polypeptide: Cathepsin B-like CP1 (303 aa).

Residues 1-19 form the signal peptide; that stretch reads MALSLLLAVVCAKPLVSRA. Asn-41 carries an N-linked (GlcNAc...) asparagine glycan. Disulfide bonds link Cys-92–Cys-119, Cys-102–Cys-145, and Cys-138–Cys-181. The active site involves Cys-105. Active-site residues include His-249 and Asn-270.

Belongs to the peptidase C1 family.

It is found in the vacuole. In terms of biological role, thiol protease which is required for parasite excystation and invasion of the proximal small intestine of the human host. The chain is Cathepsin B-like CP1 (CP1) from Giardia intestinalis (Giardia lamblia).